The sequence spans 286 residues: ATP synthase gamma chain (286 aa).

This sequence belongs to the ATPase gamma chain family. As to quaternary structure, F-type ATPases have 2 components, CF(1) - the catalytic core - and CF(0) - the membrane proton channel. CF(1) has five subunits: alpha(3), beta(3), gamma(1), delta(1), epsilon(1). CF(0) has three main subunits: a, b and c.

The protein localises to the cell membrane. Produces ATP from ADP in the presence of a proton gradient across the membrane. The gamma chain is believed to be important in regulating ATPase activity and the flow of protons through the CF(0) complex. This is ATP synthase gamma chain from Mycoplasma mobile (strain ATCC 43663 / 163K / NCTC 11711) (Mesomycoplasma mobile).